A 214-amino-acid polypeptide reads, in one-letter code: tRNA (guanine-N(7)-)-methyltransferase (214 aa).

Residues Asp-35, Glu-60, Asn-87, and Asp-113 each coordinate S-adenosyl-L-methionine. Asp-113 is an active-site residue. Lys-117 and Asp-149 together coordinate substrate.

The protein belongs to the class I-like SAM-binding methyltransferase superfamily. TrmB family.

The catalysed reaction is guanosine(46) in tRNA + S-adenosyl-L-methionine = N(7)-methylguanosine(46) in tRNA + S-adenosyl-L-homocysteine. It functions in the pathway tRNA modification; N(7)-methylguanine-tRNA biosynthesis. In terms of biological role, catalyzes the formation of N(7)-methylguanine at position 46 (m7G46) in tRNA. This Prochlorococcus marinus (strain NATL2A) protein is tRNA (guanine-N(7)-)-methyltransferase.